A 555-amino-acid chain; its full sequence is Hydroxylamine reductase (555 aa).

Residues cysteine 3, cysteine 6, cysteine 18, and cysteine 25 each contribute to the [4Fe-4S] cluster site. Residues histidine 252, glutamate 276, cysteine 320, cysteine 407, cysteine 435, cysteine 460, glutamate 494, and lysine 496 each coordinate hybrid [4Fe-2O-2S] cluster. Cysteine 407 carries the cysteine persulfide modification.

Belongs to the HCP family. [4Fe-4S] cluster serves as cofactor. The cofactor is hybrid [4Fe-2O-2S] cluster.

Its subcellular location is the cytoplasm. It catalyses the reaction A + NH4(+) + H2O = hydroxylamine + AH2 + H(+). Functionally, catalyzes the reduction of hydroxylamine to form NH(3) and H(2)O. This chain is Hydroxylamine reductase, found in Burkholderia lata (strain ATCC 17760 / DSM 23089 / LMG 22485 / NCIMB 9086 / R18194 / 383).